Reading from the N-terminus, the 215-residue chain is Pyridoxine/pyridoxamine 5'-phosphate oxidase (215 aa).

Substrate is bound by residues 9 to 12 and K69; that span reads RRDY. Residues 64 to 69, 79 to 80, K86, and Q108 contribute to the FMN site; these read RVLLLK and FT. Substrate contacts are provided by Y126, R130, and S134. FMN-binding positions include 143–144 and W188; that span reads QS. 194–196 provides a ligand contact to substrate; the sequence is RLH. Residue R198 coordinates FMN.

The protein belongs to the pyridoxamine 5'-phosphate oxidase family. In terms of assembly, homodimer. The cofactor is FMN.

The enzyme catalyses pyridoxamine 5'-phosphate + O2 + H2O = pyridoxal 5'-phosphate + H2O2 + NH4(+). It catalyses the reaction pyridoxine 5'-phosphate + O2 = pyridoxal 5'-phosphate + H2O2. It participates in cofactor metabolism; pyridoxal 5'-phosphate salvage; pyridoxal 5'-phosphate from pyridoxamine 5'-phosphate: step 1/1. The protein operates within cofactor metabolism; pyridoxal 5'-phosphate salvage; pyridoxal 5'-phosphate from pyridoxine 5'-phosphate: step 1/1. In terms of biological role, catalyzes the oxidation of either pyridoxine 5'-phosphate (PNP) or pyridoxamine 5'-phosphate (PMP) into pyridoxal 5'-phosphate (PLP). This chain is Pyridoxine/pyridoxamine 5'-phosphate oxidase, found in Pseudomonas syringae pv. syringae (strain B728a).